The sequence spans 99 residues: Putative membrane protein insertion efficiency factor (99 aa).

It belongs to the UPF0161 family.

Its subcellular location is the cell membrane. Functionally, could be involved in insertion of integral membrane proteins into the membrane. The protein is Putative membrane protein insertion efficiency factor of Corynebacterium efficiens (strain DSM 44549 / YS-314 / AJ 12310 / JCM 11189 / NBRC 100395).